Consider the following 321-residue polypeptide: Lipoyl synthase (321 aa).

Residues C68, C73, C79, C94, C98, C101, and S308 each contribute to the [4Fe-4S] cluster site. Residues 80-297 form the Radical SAM core domain; that stretch reads FNHGTATFMI…KVIAEDLGFS (218 aa).

This sequence belongs to the radical SAM superfamily. Lipoyl synthase family. [4Fe-4S] cluster is required as a cofactor.

It is found in the cytoplasm. It catalyses the reaction [[Fe-S] cluster scaffold protein carrying a second [4Fe-4S](2+) cluster] + N(6)-octanoyl-L-lysyl-[protein] + 2 oxidized [2Fe-2S]-[ferredoxin] + 2 S-adenosyl-L-methionine + 4 H(+) = [[Fe-S] cluster scaffold protein] + N(6)-[(R)-dihydrolipoyl]-L-lysyl-[protein] + 4 Fe(3+) + 2 hydrogen sulfide + 2 5'-deoxyadenosine + 2 L-methionine + 2 reduced [2Fe-2S]-[ferredoxin]. The protein operates within protein modification; protein lipoylation via endogenous pathway; protein N(6)-(lipoyl)lysine from octanoyl-[acyl-carrier-protein]: step 2/2. Its function is as follows. Catalyzes the radical-mediated insertion of two sulfur atoms into the C-6 and C-8 positions of the octanoyl moiety bound to the lipoyl domains of lipoate-dependent enzymes, thereby converting the octanoylated domains into lipoylated derivatives. In Shewanella amazonensis (strain ATCC BAA-1098 / SB2B), this protein is Lipoyl synthase.